The primary structure comprises 96 residues: Molybdopterin synthase sulfur carrier subunit (96 aa).

G96 carries the 1-thioglycine; alternate modification. A Glycyl adenylate; alternate modification is found at G96.

The protein belongs to the MoaD family. MOCS2A subfamily. Heterotetramer; composed of 2 small (MOCS2A) and 2 large (MOCS2B) subunits. Post-translationally, C-terminal thiocarboxylation occurs in 2 steps, it is first acyl-adenylated (-COAMP) via the hesA/moeB/thiF part of UBA4, then thiocarboxylated (-COSH) via the rhodanese domain of UBA4.

The protein resides in the cytoplasm. It participates in cofactor biosynthesis; molybdopterin biosynthesis. Functionally, acts as a sulfur carrier required for molybdopterin biosynthesis. Component of the molybdopterin synthase complex that catalyzes the conversion of precursor Z into molybdopterin by mediating the incorporation of 2 sulfur atoms into precursor Z to generate a dithiolene group. In the complex, serves as sulfur donor by being thiocarboxylated (-COSH) at its C-terminus by UBA4. After interaction with MOCS2B, the sulfur is then transferred to precursor Z to form molybdopterin. This chain is Molybdopterin synthase sulfur carrier subunit, found in Phaeosphaeria nodorum (strain SN15 / ATCC MYA-4574 / FGSC 10173) (Glume blotch fungus).